A 211-amino-acid polypeptide reads, in one-letter code: Ferric nitrobindin-like protein (211 aa).

Positions 21 to 27 match the GXWXGXG motif; it reads GRWRGPG. Positions 104–130 are disordered; sequence GVVQEGSDTRTEPGGAEPDPAGRRAPS.

It belongs to the nitrobindin family.

In Beutenbergia cavernae (strain ATCC BAA-8 / DSM 12333 / CCUG 43141 / JCM 11478 / NBRC 16432 / NCIMB 13614 / HKI 0122), this protein is Ferric nitrobindin-like protein.